Here is a 336-residue protein sequence, read N- to C-terminus: MLPLTYVVKAFSIGLFFSLFLMKPLISWLKKQGFQDHIHKDHCEKLEELHKDKAYIPTAGGIVFVFASVLAVLLLFPIQLWSTWFCIGTILLWGALGWCDDQIKNRRRVGHGLSAKHKFLIQNCLAAGVVLPIMFAYKESFLSFHLPFLGIVSLPHHWWSYLLSFAIATLAIVGTSNSVNLTDGLDGLAAGAMVIACLGMLVVACTNGAPWAFICCVLLATLAGSCLGFLRYNKSPARVFMGDTGSLFLGAMLGMCAVLLRAEFLLLFMGGIFVLESLSVIVQVGSYKLRKKRVFLCAPLHHHYEYKGLSEKAVVRNFLIVELICVVVGIIAVFVD.

Transmembrane regions (helical) follow at residues 1 to 21, 56 to 76, 78 to 98, 124 to 144, 148 to 168, 184 to 204, 210 to 230, 239 to 259, 264 to 284, and 314 to 334; these read MLPL…SLFL, IPTA…LLLF, IQLW…ALGW, CLAA…FLSF, FLGI…FAIA, GLDG…LVVA, PWAF…LGFL, VFMG…CAVL, FLLL…IVQV, and VVRN…IAVF.

The protein belongs to the glycosyltransferase 4 family. MraY subfamily. Mg(2+) serves as cofactor.

Its subcellular location is the cell inner membrane. It carries out the reaction UDP-N-acetyl-alpha-D-muramoyl-L-alanyl-gamma-D-glutamyl-meso-2,6-diaminopimeloyl-D-alanyl-D-alanine + di-trans,octa-cis-undecaprenyl phosphate = di-trans,octa-cis-undecaprenyl diphospho-N-acetyl-alpha-D-muramoyl-L-alanyl-D-glutamyl-meso-2,6-diaminopimeloyl-D-alanyl-D-alanine + UMP. It participates in cell wall biogenesis; peptidoglycan biosynthesis. In terms of biological role, catalyzes the initial step of the lipid cycle reactions in the biosynthesis of the cell wall peptidoglycan: transfers peptidoglycan precursor phospho-MurNAc-pentapeptide from UDP-MurNAc-pentapeptide onto the lipid carrier undecaprenyl phosphate, yielding undecaprenyl-pyrophosphoryl-MurNAc-pentapeptide, known as lipid I. This is Phospho-N-acetylmuramoyl-pentapeptide-transferase from Chlamydia trachomatis serovar L2b (strain UCH-1/proctitis).